Here is a 358-residue protein sequence, read N- to C-terminus: Homoserine O-acetyltransferase (358 aa).

The region spanning 52-337 (NVILICHALT…DEPYGHDAFL (286 aa)) is the AB hydrolase-1 domain. Residue S148 is the Nucleophile of the active site. R217 lines the substrate pocket. Residues D304 and H333 contribute to the active site. D334 contacts substrate.

The protein belongs to the AB hydrolase superfamily. MetX family. Homodimer.

The protein resides in the cytoplasm. The enzyme catalyses L-homoserine + acetyl-CoA = O-acetyl-L-homoserine + CoA. It functions in the pathway amino-acid biosynthesis; L-methionine biosynthesis via de novo pathway; O-acetyl-L-homoserine from L-homoserine: step 1/1. Functionally, transfers an acetyl group from acetyl-CoA to L-homoserine, forming acetyl-L-homoserine. The chain is Homoserine O-acetyltransferase from Chlorobium luteolum (strain DSM 273 / BCRC 81028 / 2530) (Pelodictyon luteolum).